The sequence spans 407 residues: Putative serine/threonine-protein kinase C01C4.3 (407 aa).

Positions 33–57 are enriched in polar residues; it reads NQLQNHPPRNATQSPQRQPRTSESS. Residues 33–68 form a disordered region; that stretch reads NQLQNHPPRNATQSPQRQPRTSESSMDFPRSALRRN. Residues 126–397 enclose the Protein kinase domain; it reads YTVNKQLGTG…RKCLAKEKLL (272 aa). Residues 132-140 and lysine 155 each bind ATP; that span reads LGTGRFGFI. Residue asparagine 251 is the Proton acceptor of the active site.

It belongs to the protein kinase superfamily. Ser/Thr protein kinase family.

It catalyses the reaction L-seryl-[protein] + ATP = O-phospho-L-seryl-[protein] + ADP + H(+). The enzyme catalyses L-threonyl-[protein] + ATP = O-phospho-L-threonyl-[protein] + ADP + H(+). The chain is Putative serine/threonine-protein kinase C01C4.3 from Caenorhabditis elegans.